Reading from the N-terminus, the 425-residue chain is Adenosylhomocysteinase (425 aa).

3 residues coordinate substrate: Thr-60, Asp-132, and Glu-157. 158–160 (TTT) provides a ligand contact to NAD(+). Residues Lys-187 and Asp-191 each contribute to the substrate site. Residues Asn-192, 221–226 (GYGWCG), Glu-244, Asn-279, 300–302 (SGH), and Asn-347 each bind NAD(+).

It belongs to the adenosylhomocysteinase family. It depends on NAD(+) as a cofactor.

The protein localises to the cytoplasm. The enzyme catalyses S-adenosyl-L-homocysteine + H2O = L-homocysteine + adenosine. It participates in amino-acid biosynthesis; L-homocysteine biosynthesis; L-homocysteine from S-adenosyl-L-homocysteine: step 1/1. Its function is as follows. May play a key role in the regulation of the intracellular concentration of adenosylhomocysteine. The chain is Adenosylhomocysteinase from Nostoc sp. (strain PCC 7120 / SAG 25.82 / UTEX 2576).